Here is a 341-residue protein sequence, read N- to C-terminus: ATPase GET3 (341 aa).

Residue 34 to 41 participates in ATP binding; sequence KGGVGKTT. The active site involves aspartate 63. 2 residues coordinate ATP: glutamate 245 and asparagine 272. Residues cysteine 283 and cysteine 286 each contribute to the Zn(2+) site.

Belongs to the arsA ATPase family. In terms of assembly, homodimer.

The protein resides in the cytoplasm. It localises to the endoplasmic reticulum. Functionally, ATPase required for the post-translational delivery of tail-anchored (TA) proteins to the endoplasmic reticulum. Recognizes and selectively binds the transmembrane domain of TA proteins in the cytosol. This complex then targets to the endoplasmic reticulum by membrane-bound receptors, where the tail-anchored protein is released for insertion. This process is regulated by ATP binding and hydrolysis. ATP binding drives the homodimer towards the closed dimer state, facilitating recognition of newly synthesized TA membrane proteins. ATP hydrolysis is required for insertion. Subsequently, the homodimer reverts towards the open dimer state, lowering its affinity for the membrane-bound receptor, and returning it to the cytosol to initiate a new round of targeting. The sequence is that of ATPase GET3 from Paracoccidioides brasiliensis (strain Pb18).